The chain runs to 88 residues: Cell division topological specificity factor (88 aa).

Belongs to the MinE family.

Its function is as follows. Prevents the cell division inhibition by proteins MinC and MinD at internal division sites while permitting inhibition at polar sites. This ensures cell division at the proper site by restricting the formation of a division septum at the midpoint of the long axis of the cell. In Aeromonas salmonicida (strain A449), this protein is Cell division topological specificity factor.